Reading from the N-terminus, the 471-residue chain is Iroquois-class homeodomain protein IRX-2 (471 aa).

Residues 112 to 175 (LNDPAYRKNA…ANARRRLKKE (64 aa)) constitute a DNA-binding region (homeobox; TALE-type). Disordered stretches follow at residues 176–373 (NKMT…SPYP) and 424–471 (APKA…QPYL). Phosphoserine is present on S186. A compositionally biased stretch (basic and acidic residues) spans 195–209 (DATRSKDESPDKAQE). The segment covering 261 to 273 (DDLEDDEDDDEEG) has biased composition (acidic residues). Residues 355 to 367 (PAAAAPASTGAPP) show a composition bias toward low complexity. A compositionally biased stretch (gly residues) spans 462 to 471 (VVGGGVQPYL).

Belongs to the TALE/IRO homeobox family.

Its subcellular location is the nucleus. The polypeptide is Iroquois-class homeodomain protein IRX-2 (IRX2) (Homo sapiens (Human)).